We begin with the raw amino-acid sequence, 45 residues long: MLLEPRVTGCFLSSSEQALPPAIYFPLLLLLRSGARNIVGITSVG.

This is an uncharacterized protein from Treponema pallidum (strain Nichols).